Consider the following 145-residue polypeptide: D-aminoacyl-tRNA deacylase (145 aa).

The Gly-cisPro motif, important for rejection of L-amino acids motif lies at 137 to 138 (GP).

The protein belongs to the DTD family. In terms of assembly, homodimer.

The protein resides in the cytoplasm. It catalyses the reaction glycyl-tRNA(Ala) + H2O = tRNA(Ala) + glycine + H(+). The catalysed reaction is a D-aminoacyl-tRNA + H2O = a tRNA + a D-alpha-amino acid + H(+). Functionally, an aminoacyl-tRNA editing enzyme that deacylates mischarged D-aminoacyl-tRNAs. Also deacylates mischarged glycyl-tRNA(Ala), protecting cells against glycine mischarging by AlaRS. Acts via tRNA-based rather than protein-based catalysis; rejects L-amino acids rather than detecting D-amino acids in the active site. By recycling D-aminoacyl-tRNA to D-amino acids and free tRNA molecules, this enzyme counteracts the toxicity associated with the formation of D-aminoacyl-tRNA entities in vivo and helps enforce protein L-homochirality. This Klebsiella pneumoniae subsp. pneumoniae (strain ATCC 700721 / MGH 78578) protein is D-aminoacyl-tRNA deacylase.